The chain runs to 165 residues: Peptide methionine sulfoxide reductase MsrA (165 aa).

Cys10 is an active-site residue.

It belongs to the MsrA Met sulfoxide reductase family.

The catalysed reaction is L-methionyl-[protein] + [thioredoxin]-disulfide + H2O = L-methionyl-(S)-S-oxide-[protein] + [thioredoxin]-dithiol. It catalyses the reaction [thioredoxin]-disulfide + L-methionine + H2O = L-methionine (S)-S-oxide + [thioredoxin]-dithiol. Its function is as follows. Has an important function as a repair enzyme for proteins that have been inactivated by oxidation. Catalyzes the reversible oxidation-reduction of methionine sulfoxide in proteins to methionine. The sequence is that of Peptide methionine sulfoxide reductase MsrA from Campylobacter jejuni subsp. jejuni serotype O:6 (strain 81116 / NCTC 11828).